Consider the following 239-residue polypeptide: Pyridoxine 5'-phosphate synthase (239 aa).

A 3-amino-2-oxopropyl phosphate-binding site is contributed by Asn-7. 1-deoxy-D-xylulose 5-phosphate is bound at residue 9-10 (DH). Residue Arg-18 coordinates 3-amino-2-oxopropyl phosphate. His-43 serves as the catalytic Proton acceptor. Arg-45 and His-50 together coordinate 1-deoxy-D-xylulose 5-phosphate. The active-site Proton acceptor is the Glu-70. Thr-100 contributes to the 1-deoxy-D-xylulose 5-phosphate binding site. His-191 serves as the catalytic Proton donor. 3-amino-2-oxopropyl phosphate-binding positions include Gly-192 and 213–214 (GH).

It belongs to the PNP synthase family. As to quaternary structure, homooctamer; tetramer of dimers.

The protein localises to the cytoplasm. It carries out the reaction 3-amino-2-oxopropyl phosphate + 1-deoxy-D-xylulose 5-phosphate = pyridoxine 5'-phosphate + phosphate + 2 H2O + H(+). The protein operates within cofactor biosynthesis; pyridoxine 5'-phosphate biosynthesis; pyridoxine 5'-phosphate from D-erythrose 4-phosphate: step 5/5. Catalyzes the complicated ring closure reaction between the two acyclic compounds 1-deoxy-D-xylulose-5-phosphate (DXP) and 3-amino-2-oxopropyl phosphate (1-amino-acetone-3-phosphate or AAP) to form pyridoxine 5'-phosphate (PNP) and inorganic phosphate. This chain is Pyridoxine 5'-phosphate synthase, found in Gloeobacter violaceus (strain ATCC 29082 / PCC 7421).